The primary structure comprises 23 residues: Putative gene 50 protein (23 aa).

This is Putative gene 50 protein (50) from Bacillus subtilis (Bacteriophage SP01).